A 154-amino-acid chain; its full sequence is Cold shock domain-containing protein C2 (154 aa).

The residue at position 19 (Ser-19) is a Phosphoserine. A disordered region spans residues 38–62 (GGGIAPRDLPSPLPTKRTRTYSATA). The CSD domain occupies 69–136 (VFKGVCKQFS…KFQAVEVVLT (68 aa)).

The protein localises to the nucleus. Its subcellular location is the cytoplasm. In terms of biological role, RNA-binding factor which binds specifically to the very 3'-UTR ends of both histone H1 and H3.3 mRNAs, encompassing the polyadenylation signal. Might play a central role in the negative regulation of histone variant synthesis in the developing brain. The chain is Cold shock domain-containing protein C2 (Csdc2) from Mus musculus (Mouse).